Consider the following 28-residue polypeptide: leu operon leader peptide (28 aa).

In terms of biological role, involved in control of the biosynthesis of leucine. The protein is leu operon leader peptide (leuL) of Shigella flexneri.